Here is a 184-residue protein sequence, read N- to C-terminus: Cytosolic Prostaglandin E synthase (184 aa).

The CS domain occupies 7-96 (LIPPPVSWAQ…AAGPYWSSLT (90 aa)). The disordered stretch occupies residues 115–184 (ESDDEEGDQK…EGDKEKKPAA (70 aa)). Ser-116, Ser-127, Ser-135, Ser-156, and Ser-162 each carry phosphoserine. A compositionally biased stretch (acidic residues) spans 147 to 158 (FNVDDEEEDSDD). Basic and acidic residues predominate over residues 175–184 (EGDKEKKPAA).

Belongs to the p23/wos2 family.

It localises to the cytoplasm. The catalysed reaction is prostaglandin H2 = prostaglandin E2. Its function is as follows. Cytosolic prostaglandin synthase that catalyzes the oxidoreduction of prostaglandin endoperoxide H2 (PGH2) to prostaglandin E2 (PGE2). Through production of PGE2 may regulate the activity of non-muscle myosin II in an autocrine or paracrine fashion; this may influence border cell and nurse cell stiffness to facilitate border cell migration during oogenesis. The chain is Cytosolic Prostaglandin E synthase from Drosophila melanogaster (Fruit fly).